We begin with the raw amino-acid sequence, 665 residues long: Cyclic nucleotide-gated cation channel subunit A (665 aa).

Residues 1–110 (MRHFKVKAMV…DPTLQSHYRW (110 aa)) lie on the Cytoplasmic side of the membrane. The chain crosses the membrane as a helical span at residues 111–131 (LAIVSLAVLYNIIFVVGRAVF). At 132-138 (WEINKSA) the chain is on the extracellular side. Asn135 carries N-linked (GlcNAc...) asparagine glycosylation. The chain crosses the membrane as a helical span at residues 139-159 (PAFWYTLDYLCDFIYLLDTLV). At 160–186 (HMHEGFLDQGLLVRDAFRLRRHYFHTK) the chain is on the cytoplasmic side. Residues 187-207 (GWYLDVLSMLPTDLAYIWWPP) traverse the membrane as a helical segment. At 208–253 (ETCSSLYLPCPVIVRLNRLLRINRLWEWFDRTETATGYPNAFRICK) the chain is on the extracellular side. The chain crosses the membrane as a helical span at residues 254–274 (VVLAILVLIHWNACMYFAISY). The Cytoplasmic segment spans residues 275–325 (EIGFSSDSWVYNLNGTRNNTLQRQYIYSFYWSTLTLTTIGETPTPENDVEY). Residues 326-346 (LFVVADFLAGVLIFATIVGNI) form a helical membrane-spanning segment. The Extracellular portion of the chain corresponds to 347 to 481 (GSMISNMNVA…GKLSVVGDDG (135 aa)). 3',5'-cyclic GMP-binding positions include 437–559 (LLEA…DGLL), Glu496, and Arg511. The helical transmembrane segment at 482–502 (ITVLATLGAGSVFGEVSVLEI) threads the bilayer. Residues 503 to 665 (AGNRTGNRRT…SSDAAKQNTL (163 aa)) lie on the Cytoplasmic side of the membrane. Positions 633 to 665 (RSGRLYSLQPKRRPRSRPDATAKSSDAAKQNTL) are disordered. Positions 654–665 (AKSSDAAKQNTL) are enriched in polar residues.

The protein belongs to the cyclic nucleotide-gated cation channel (TC 1.A.1.5) family. Expressed in antennae and the visual system.

Its subcellular location is the membrane. Functionally, approximately 50-fold more sensitive to cGMP than to cAMP. May be involved in transduction cascades of both invertebrate photoreceptors and olfactory sensillae. The polypeptide is Cyclic nucleotide-gated cation channel subunit A (CngA) (Drosophila melanogaster (Fruit fly)).